A 292-amino-acid polypeptide reads, in one-letter code: MAAAAAAVAGAGRGGGGGAEPRQERSRARGWAGAERSEGRRMEPGEELEEEDSPGGREDGFTAEHLAAEAMAADMDPWLVFDARMTPATELDAWLAKYPPSQVTRYGDPGSPNSEPVGWIAAYGQGYIPNSGDVQGLQAAWEALQTSGRPVTPGTLRQLAITHQVLSGKWLIHLAPGFKLDHAWAGIARAVVEGRLQVAKVSPRAKEGGRQVICVYTDDFTDRLGVLEADAAIRAAGVKCLLTYKPDVYTYLGIYRANRWHLCPTLYESRFQLGGSARGSRVLDRANNVELT.

Residues 1-10 are compositionally biased toward low complexity; that stretch reads MAAAAAAVAG. The interval 1–60 is disordered; it reads MAAAAAAVAGAGRGGGGGAEPRQERSRARGWAGAERSEGRRMEPGEELEEEDSPGGREDG. A compositionally biased stretch (basic and acidic residues) spans 35-44; it reads ERSEGRRMEP.

It belongs to the UPF0696 family.

In Bos taurus (Bovine), this protein is UPF0696 protein C11orf68 homolog.